The following is a 661-amino-acid chain: Putative DUF21 domain-containing protein At3g13070, chloroplastic (661 aa).

The N-terminal 71 residues, 1–71 (MMGMALELSV…RSCEFSYRSR (71 aa)), are a transit peptide targeting the chloroplast. Helical transmembrane passes span 105 to 125 (GIVIGALVCGVFLYGCQKVLA), 162 to 182 (GLILAALLSLSAFFSMAETSI), 213 to 233 (FLTTILIGTTVVNIAATALVT), 239 to 259 (IFGEAGVSAATGLMTVAILLL), and 285 to 305 (WLSLVLYPVGRIVTYLSMGIL). A CNNM transmembrane domain is found at 154–340 (VLTVLREQGL…ELSGAIEEEE (187 aa)). 2 CBS domains span residues 359-420 (MTPL…LLES) and 426-484 (MAHK…IFDE). Disordered regions lie at residues 559–578 (ESWEEDGEEEEGKQERQEPK) and 628–661 (SSEEDDGNLSNEEDQSENAVLDEHVLADNSKKQQ). Acidic residues-rich tracts occupy residues 560–570 (SWEEDGEEEEG) and 630–643 (EEDDGNLSNEEDQS). Residues 648-661 (LDEHVLADNSKKQQ) show a composition bias toward basic and acidic residues.

The protein localises to the plastid. The protein resides in the chloroplast membrane. The polypeptide is Putative DUF21 domain-containing protein At3g13070, chloroplastic (CBSDUFCH1) (Arabidopsis thaliana (Mouse-ear cress)).